Here is a 625-residue protein sequence, read N- to C-terminus: Procollagen galactosyltransferase 2 (625 aa).

A signal peptide spans 1-26 (MAARLATVACALFLLSSALLRLGCRA). Asparagine 96, asparagine 184, asparagine 381, and asparagine 579 each carry an N-linked (GlcNAc...) asparagine glycan. Residues 597-625 (QGHIRSTAKNTEALPPPTSLDTVPSRDEL) are disordered. Residues 622 to 625 (RDEL) carry the Prevents secretion from ER motif.

The protein belongs to the glycosyltransferase 25 family.

It is found in the endoplasmic reticulum lumen. It carries out the reaction (5R)-5-hydroxy-L-lysyl-[collagen] + UDP-alpha-D-galactose = (5R)-5-O-(beta-D-galactosyl)-5-hydroxy-L-lysyl-[collagen] + UDP + H(+). Beta-galactosyltransferase that transfers beta-galactose to hydroxylysine residues of collagen. The chain is Procollagen galactosyltransferase 2 (Colgalt2) from Mus musculus (Mouse).